A 479-amino-acid polypeptide reads, in one-letter code: Muscarinic acetylcholine receptor M4 (479 aa).

Residues 1 to 31 (MANFTPVNGSSGNQSVRLVTSSSHNRYETVE) are Extracellular-facing. Residues Asn8 and Asn13 are each glycosylated (N-linked (GlcNAc...) asparagine). Residues 32-54 (MVFIATVTGSLSLVTVVGNILVM) form a helical membrane-spanning segment. The Cytoplasmic portion of the chain corresponds to 55-68 (LSIKVNRQLQTVNN). The helical transmembrane segment at 69–89 (YFLFSLACADLIIGAFSMNLY) threads the bilayer. The Extracellular portion of the chain corresponds to 90-106 (TVYIIKGYWPLGAVVCD). The cysteines at positions 105 and 185 are disulfide-linked. Residues 107–128 (LWLALDYVVSNASVMNLLIISF) traverse the membrane as a helical segment. The Cytoplasmic portion of the chain corresponds to 129–148 (DRYFCVTKPLTYPARRTTKM). A helical transmembrane segment spans residues 149-171 (AGLMIAAAWVLSFVLWAPAILFW). The Extracellular portion of the chain corresponds to 172–193 (QFVVGKRTVPDNQCFIQFLSNP). The helical transmembrane segment at 194–216 (AVTFGTAIAAFYLPVVIMTVLYI) threads the bilayer. Residues 217–401 (HISLASRSRV…AARERKVTRT (185 aa)) are Cytoplasmic-facing. The interval 271 to 333 (KLEEAPPPAL…PAPPLQPRAL (63 aa)) is disordered. Pro residues predominate over residues 275–286 (APPPALPPPPRP). A compositionally biased stretch (polar residues) spans 294–304 (NESSSGSATQN). Residues 402-422 (IFAILLAFILTWTPYNVMVLV) form a helical membrane-spanning segment. At 423–436 (NTFCQSCIPDTVWS) the chain is on the extracellular side. Residues 437–456 (IGYWLCYVNSTINPACYALC) traverse the membrane as a helical segment. Residues 457–479 (NATFKKTFRHLLLCQYRNIGTAR) are Cytoplasmic-facing. Thr459, Thr463, and Thr477 each carry phosphothreonine.

This sequence belongs to the G-protein coupled receptor 1 family. Muscarinic acetylcholine receptor subfamily. CHRM4 sub-subfamily.

Its subcellular location is the cell membrane. The protein localises to the postsynaptic cell membrane. Functionally, the muscarinic acetylcholine receptor mediates various cellular responses, including inhibition of adenylate cyclase, breakdown of phosphoinositides and modulation of potassium channels through the action of G proteins. Primary transducing effect is inhibition of adenylate cyclase. The sequence is that of Muscarinic acetylcholine receptor M4 (CHRM4) from Homo sapiens (Human).